We begin with the raw amino-acid sequence, 246 residues long: uncharacterized protein (246 aa).

This is an uncharacterized protein from Campylobacter jejuni subsp. jejuni serotype O:2 (strain ATCC 700819 / NCTC 11168).